A 106-amino-acid chain; its full sequence is A-type ATP synthase subunit F (106 aa).

The protein belongs to the V-ATPase F subunit family. In terms of assembly, has multiple subunits with at least A(3), B(3), C, D, E, F, H, I and proteolipid K(x).

The protein resides in the cell membrane. Component of the A-type ATP synthase that produces ATP from ADP in the presence of a proton gradient across the membrane. This chain is A-type ATP synthase subunit F, found in Methanothermobacter thermautotrophicus (strain ATCC 29096 / DSM 1053 / JCM 10044 / NBRC 100330 / Delta H) (Methanobacterium thermoautotrophicum).